The following is a 629-amino-acid chain: MCTKRQYGLLESIRSPRDLDSFTPHQLDELECQVRDFLIQSVAKTGGHLGSNLGVVELSIALHRSFRSPEDCIIFDVGHQCYVHKLITGRHDFKALRCKNGLSGYPSRHESNHDIVENSHASAALSWADGVSRARTLLGNDNYVIAVVGDGSLTGGMCWEALNNISDDNNRRLVIVVNDNGRSYARTIGGIARFLNAVRASKSYLWLRESSEAVFSHMGSPGRRLYQGIRGAIHGFLSRFSSSNKLFSNLDIRYLGPINGHNRKALEKAFKQAKQYARPIIVHVITEKGHGYPPALEDALDCLHTVGVIDPSTGKSASVQGQVRQDTWTGVFGEELLRLAESNTNIVAVTAAMLHPTGLSMFAEKFPHRVFDVGIAEQHAVASAAGLAYEGLHPVVAIYSTFMNRAFDQVMMDVALHGAPVTFVLDRAGITGPDGASHHGIWDLSLLRIVPGIKLYAPRDASTLRNTLALVCSEDCPTAIRFPRGSVCDDLPALRSLDDGIDVLYGSCDREDIVIVAIGVMAHACVRAAQLLAESGIESTVINPVCFWPLHRQVLARVSKAKLVVLAEEGAKSPGLGDYIAGRRLLEFVIPGDFQPQGSRDELLDAIGLNGEHIARKIKARFNQIINCV.

Thiamine diphosphate-binding positions include His79 and 119–121; that span reads SHA. Asp150 lines the Mg(2+) pocket. Thiamine diphosphate is bound by residues 151–152, Asn180, Tyr292, and Glu377; that span reads GS. Asn180 is a Mg(2+) binding site.

Belongs to the transketolase family. DXPS subfamily. Homodimer. It depends on Mg(2+) as a cofactor. Thiamine diphosphate is required as a cofactor.

The enzyme catalyses D-glyceraldehyde 3-phosphate + pyruvate + H(+) = 1-deoxy-D-xylulose 5-phosphate + CO2. It participates in metabolic intermediate biosynthesis; 1-deoxy-D-xylulose 5-phosphate biosynthesis; 1-deoxy-D-xylulose 5-phosphate from D-glyceraldehyde 3-phosphate and pyruvate: step 1/1. Functionally, catalyzes the acyloin condensation reaction between C atoms 2 and 3 of pyruvate and glyceraldehyde 3-phosphate to yield 1-deoxy-D-xylulose-5-phosphate (DXP). The sequence is that of 1-deoxy-D-xylulose-5-phosphate synthase from Tropheryma whipplei (strain TW08/27) (Whipple's bacillus).